We begin with the raw amino-acid sequence, 84 residues long: Inactive transposase YbfQ (84 aa).

This is Inactive transposase YbfQ (ybfQ) from Escherichia coli (strain K12).